A 194-amino-acid chain; its full sequence is dTTP/UTP pyrophosphatase (194 aa).

Catalysis depends on D77, which acts as the Proton acceptor.

It belongs to the Maf family. YhdE subfamily. Requires a divalent metal cation as cofactor.

The protein resides in the cytoplasm. The catalysed reaction is dTTP + H2O = dTMP + diphosphate + H(+). The enzyme catalyses UTP + H2O = UMP + diphosphate + H(+). Functionally, nucleoside triphosphate pyrophosphatase that hydrolyzes dTTP and UTP. May have a dual role in cell division arrest and in preventing the incorporation of modified nucleotides into cellular nucleic acids. In Flavobacterium johnsoniae (strain ATCC 17061 / DSM 2064 / JCM 8514 / BCRC 14874 / CCUG 350202 / NBRC 14942 / NCIMB 11054 / UW101) (Cytophaga johnsonae), this protein is dTTP/UTP pyrophosphatase.